A 558-amino-acid polypeptide reads, in one-letter code: 2-hydroxy-7-methoxy-5-methyl-1-naphthoate--CoA ligase (558 aa).

Residues 212-213 (GG), 329-331 (ASR), Val-351, Asp-435, Arg-450, and Lys-542 each bind ATP.

The protein belongs to the ATP-dependent AMP-binding enzyme family.

It carries out the reaction 2-hydroxy-7-methoxy-5-methyl-1-naphthoate + ATP + CoA = 2-hydroxy-7-methoxy-5-methyl-1-naphthoyl-CoA + AMP + diphosphate. Its pathway is antibiotic biosynthesis. Functionally, catalyzes the activation of 2-hydroxy-7-methoxy-5-methyl-1-naphthoate in the biosynthesis of the naphthoate moiety of the neocarzinostatin chromophore. Also catalyzes the activation of other 1-naphthoic acid analogs such as 2-hydroxy-5-methyl-1-naphthoate or 2,7-dihydroxy-5-methyl-1-naphthoate in vitro. The chain is 2-hydroxy-7-methoxy-5-methyl-1-naphthoate--CoA ligase from Streptomyces carzinostaticus.